A 102-amino-acid chain; its full sequence is Large ribosomal subunit protein uL24 (102 aa).

It belongs to the universal ribosomal protein uL24 family. As to quaternary structure, part of the 50S ribosomal subunit.

Its function is as follows. One of two assembly initiator proteins, it binds directly to the 5'-end of the 23S rRNA, where it nucleates assembly of the 50S subunit. One of the proteins that surrounds the polypeptide exit tunnel on the outside of the subunit. This is Large ribosomal subunit protein uL24 from Leuconostoc mesenteroides subsp. mesenteroides (strain ATCC 8293 / DSM 20343 / BCRC 11652 / CCM 1803 / JCM 6124 / NCDO 523 / NBRC 100496 / NCIMB 8023 / NCTC 12954 / NRRL B-1118 / 37Y).